Here is a 208-residue protein sequence, read N- to C-terminus: Large ribosomal subunit protein bL25 (208 aa).

This sequence belongs to the bacterial ribosomal protein bL25 family. CTC subfamily. In terms of assembly, part of the 50S ribosomal subunit; part of the 5S rRNA/L5/L18/L25 subcomplex. Contacts the 5S rRNA. Binds to the 5S rRNA independently of L5 and L18.

Its function is as follows. This is one of the proteins that binds to the 5S RNA in the ribosome where it forms part of the central protuberance. The chain is Large ribosomal subunit protein bL25 from Bartonella quintana (strain Toulouse) (Rochalimaea quintana).